We begin with the raw amino-acid sequence, 368 residues long: Ferrochelatase (368 aa).

Fe cation contacts are provided by His-209 and Glu-290.

Belongs to the ferrochelatase family.

The protein resides in the cytoplasm. The enzyme catalyses heme b + 2 H(+) = protoporphyrin IX + Fe(2+). It participates in porphyrin-containing compound metabolism; protoheme biosynthesis; protoheme from protoporphyrin-IX: step 1/1. Catalyzes the ferrous insertion into protoporphyrin IX. The sequence is that of Ferrochelatase from Herminiimonas arsenicoxydans.